Here is a 479-residue protein sequence, read N- to C-terminus: Replication factor C large subunit (479 aa).

50-57 (GPPGSGKT) contributes to the ATP binding site. The span at 420 to 468 (EKIRKERKEEEKVEVREEKPEEKVEEKREERETKKEKEKKEEKKAEKKG) shows a compositional bias: basic and acidic residues. Positions 420-479 (EKIRKERKEEEKVEVREEKPEEKVEEKREERETKKEKEKKEEKKAEKKGKQVTLFDFIKK) are disordered.

It belongs to the activator 1 small subunits family. RfcL subfamily. Heterohexamer composed of four small subunits (RfcS) and two large subunits (RfcL).

Part of the RFC clamp loader complex which loads the PCNA sliding clamp onto DNA. The complex possesses DNA-independent ATPase activity. This chain is Replication factor C large subunit (rfcL), found in Pyrococcus abyssi (strain GE5 / Orsay).